The primary structure comprises 354 residues: S-adenosylmethionine:tRNA ribosyltransferase-isomerase (354 aa).

The protein belongs to the QueA family. Monomer.

It localises to the cytoplasm. It catalyses the reaction 7-aminomethyl-7-carbaguanosine(34) in tRNA + S-adenosyl-L-methionine = epoxyqueuosine(34) in tRNA + adenine + L-methionine + 2 H(+). It functions in the pathway tRNA modification; tRNA-queuosine biosynthesis. Its function is as follows. Transfers and isomerizes the ribose moiety from AdoMet to the 7-aminomethyl group of 7-deazaguanine (preQ1-tRNA) to give epoxyqueuosine (oQ-tRNA). The chain is S-adenosylmethionine:tRNA ribosyltransferase-isomerase from Pseudomonas syringae pv. tomato (strain ATCC BAA-871 / DC3000).